A 269-amino-acid chain; its full sequence is Diaminopimelate epimerase (269 aa).

Positions 13, 47, and 65 each coordinate substrate. Cys74 acts as the Proton donor in catalysis. Residues 75-76, Asn149, Asn182, and 200-201 each bind substrate; these read GN and ER. The active-site Proton acceptor is Cys209. A substrate-binding site is contributed by 210-211; it reads GT.

This sequence belongs to the diaminopimelate epimerase family. As to quaternary structure, homodimer.

The protein resides in the cytoplasm. The catalysed reaction is (2S,6S)-2,6-diaminopimelate = meso-2,6-diaminopimelate. The protein operates within amino-acid biosynthesis; L-lysine biosynthesis via DAP pathway; DL-2,6-diaminopimelate from LL-2,6-diaminopimelate: step 1/1. Functionally, catalyzes the stereoinversion of LL-2,6-diaminopimelate (L,L-DAP) to meso-diaminopimelate (meso-DAP), a precursor of L-lysine and an essential component of the bacterial peptidoglycan. This chain is Diaminopimelate epimerase, found in Erythrobacter litoralis (strain HTCC2594).